Reading from the N-terminus, the 91-residue chain is Early E3B 10.4 kDa protein (91 aa).

The first 22 residues, 1–22, serve as a signal peptide directing secretion; it reads MIPRNFFFTILICAFNVCATFT. Residues 23-34 lie on the Lumenal side of the membrane; that stretch reads AVATASPDCIGP. Residues 35-60 form a helical membrane-spanning segment; sequence FASYALFAFVTCICVCSIVCLVINFF. At 61 to 91 the chain is on the cytoplasmic side; sequence QLVDWIFVRIAYLRHHPEYRNQNVAALLRLI.

It belongs to the adenoviridae E3B family.

It localises to the host endoplasmic reticulum membrane. Down-regulates the EGF receptor. The protein is Early E3B 10.4 kDa protein of Homo sapiens (Human).